We begin with the raw amino-acid sequence, 122 residues long: uncharacterized protein (122 aa).

Residues 1–15 (MAEPGGRGDYHKDGR) show a composition bias toward basic and acidic residues. The tract at residues 1 to 26 (MAEPGGRGDYHKDGRPPSLSRSPLFT) is disordered.

This is an uncharacterized protein from Macaca fascicularis (Crab-eating macaque).